A 731-amino-acid chain; its full sequence is Gelsolin (731 aa).

An actin-severing region spans residues 2–125; the sequence is VVEHPEFLKA…YKKGGVASGF (124 aa). Residues 25–107 form a Gelsolin-like 1 repeat; it reads FDLVPVPPNL…VQGFESATFL (83 aa). Tyrosine 35 is modified (phosphotyrosine). Ca(2+) contacts are provided by glycine 41, aspartate 42, glutamate 73, aspartate 85, glycine 90, and alanine 92. The segment at 72–75 is actin-actin interfilament contact point; sequence DESG. Position 111–118 (111–118) interacts with a 1,2-diacyl-sn-glycero-3-phospho-(1D-myo-inositol-4,5-bisphosphate); the sequence is KSGLKYKK. Residue valine 121 participates in Ca(2+) binding. An a 1,2-diacyl-sn-glycero-3-phospho-(1D-myo-inositol-4,5-bisphosphate)-binding site is contributed by 137–145; it reads RLLQVKGRR. The Gelsolin-like 2 repeat unit spans residues 147–219; the sequence is VRATEVPVSW…FEEGAEPEAM (73 aa). Residues glycine 162 and aspartate 163 each contribute to the Ca(2+) site. A disulfide bond links cysteine 164 and cysteine 177. Glutamate 185, aspartate 235, glutamate 278, aspartate 279, and glutamate 303 together coordinate Ca(2+). Residues 266-338 form a Gelsolin-like 3 repeat; it reads DENPFAQGAL…LPEGGETPLF (73 aa). Tyrosine 358 and tyrosine 414 each carry phosphotyrosine. The interval 383–731 is actin-binding, Ca-sensitive; sequence AAQHGMDDDG…LDRALAELAA (349 aa). One copy of the Gelsolin-like 4 repeat lies at 404–485; that stretch reads SNKVPVDPAT…VQGKEPAHLM (82 aa). Glycine 420, aspartate 421, glutamate 451, aspartate 463, glycine 468, proline 470, and threonine 500 together coordinate Ca(2+). At lysine 533 the chain carries N6-acetyllysine. The stretch at 533–591 is one Gelsolin-like 5 repeat; the sequence is KAGALNSNDAFVLKTPSAAYLWVGAGASEAEKTGAQELLRVLRAQPVQVAEGSEPDSFW. Ca(2+)-binding residues include asparagine 540 and aspartate 541. Tyrosine 552 carries the phosphotyrosine modification. A Ca(2+)-binding site is contributed by glutamate 563. A Phosphotyrosine modification is found at tyrosine 600. The stretch at 630-705 is one Gelsolin-like 6 repeat; that stretch reads IEEVPGEFMQ…VKQGFEPPSF (76 aa). Ca(2+) contacts are provided by aspartate 645, aspartate 646, and glutamate 668. Threonine 691 bears the Phosphothreonine mark.

The protein belongs to the villin/gelsolin family. In terms of assembly, binds to actin and to fibronectin. Identified in a complex composed of ACTA1, COBL, GSN and TMSB4X. Interacts with the inactive form of EIF2AK2/PKR. Interacts with FLII.

The protein localises to the cytoplasm. It localises to the cytoskeleton. Its function is as follows. Calcium-regulated, actin-modulating protein that binds to the plus (or barbed) ends of actin monomers or filaments, preventing monomer exchange (end-blocking or capping). It can promote the assembly of monomers into filaments (nucleation) as well as sever filaments already formed. Plays a role in ciliogenesis. This Equus caballus (Horse) protein is Gelsolin (GSN).